The following is an 858-amino-acid chain: Heat shock protein 105 kDa (858 aa).

Serine 2 is subject to N-acetylserine. Residue lysine 471 is modified to N6-acetyllysine. Disordered stretches follow at residues 500–585 (KVPT…PPEA) and 801–858 (VTQP…MDLD). Acidic residues predominate over residues 504 to 515 (EEEDGSSVEADM). A phosphoserine mark is found at serine 509 and serine 510. Positions 533–555 (QQDNSEAGTQPQVQTDGQQTSQS) are enriched in polar residues. A Phosphoserine modification is found at serine 558. Threonine 562 carries the phosphothreonine modification. Composition is skewed to basic and acidic residues over residues 564-585 (EENK…PPEA) and 806-815 (PKIESPKLER). Phosphoserine is present on serine 810. Position 816 is a phosphothreonine (threonine 816).

Belongs to the heat shock protein 70 family. In terms of assembly, interacts with HSPA8/HSC70. Interacts with HSPA1A (via NBD) and HSPA1B (via NBD). Phosphorylation on Ser-509 may be important for regulation of the HSPA8/HSC70 chaperone activity.

The protein localises to the cytoplasm. In terms of biological role, acts as a nucleotide-exchange factor (NEF) for chaperone proteins HSPA1A and HSPA1B, promoting the release of ADP from HSPA1A/B thereby triggering substrate release. Prevents the aggregation of denatured proteins in cells under severe stress, on which the ATP levels decrease markedly. Inhibits HSPA8/HSC70 ATPase and chaperone activities. This chain is Heat shock protein 105 kDa (Hsph1), found in Rattus norvegicus (Rat).